The primary structure comprises 314 residues: Olfactory receptor 5P81 (314 aa).

At 1–28 (MAFLEDGNHTVVTEFILLGLTDDPVLRV) the chain is on the extracellular side. Asparagine 8 carries N-linked (GlcNAc...) asparagine glycosylation. Residues 29–49 (ILFIIILCIYLVTVSGNLSTI) form a helical membrane-spanning segment. Over 50 to 57 (LLIRVSSQ) the chain is Cytoplasmic. Residues 58-78 (LHHPMYFFLSHLASIDIAISS) form a helical membrane-spanning segment. Residues 79–102 (SVTPNMVVNFLVERSSISYIGCGI) lie on the Extracellular side of the membrane. Cysteines 100 and 192 form a disulfide. Residues 103 to 123 (QLGSAVFFGAIECFLLAVMAY) form a helical membrane-spanning segment. Over 124 to 136 (DRFVAICNPLLYS) the chain is Cytoplasmic. The helical transmembrane segment at 137 to 157 (TKMSKQVCIQLLVGSYIGGFI) threads the bilayer. Residues 158-199 (HASFFTLSFVSFLFCGPNRINHFFCDFTPLVELSCSDNSVLI) lie on the Extracellular side of the membrane. A helical membrane pass occupies residues 200–220 (ILDSFSTGTIIVITVFVIAIS). Over 221–240 (YTCILITILKMHSTEGRHKA) the chain is Cytoplasmic. The chain crosses the membrane as a helical span at residues 241–261 (FSTCTSHLTVVTLLYGTVTFI). Residues 262–274 (YVMPKSSYSTDQN) are Extracellular-facing. Residues 275-295 (KVISVFYMVVIPMLNPIIYSL) traverse the membrane as a helical segment. Residues 296 to 314 (RNNEIKGALKKQLGEKNIF) are Cytoplasmic-facing.

It belongs to the G-protein coupled receptor 1 family.

It is found in the cell membrane. Functionally, potential odorant receptor. The protein is Olfactory receptor 5P81 of Mus musculus (Mouse).